A 354-amino-acid polypeptide reads, in one-letter code: Adenine deaminase (354 aa).

Histidine 19, histidine 21, and histidine 211 together coordinate Zn(2+). Residue glutamate 214 is the Proton donor of the active site. Aspartate 291 serves as a coordination point for Zn(2+). Aspartate 292 contributes to the substrate binding site.

It belongs to the metallo-dependent hydrolases superfamily. Adenosine and AMP deaminases family. Adenine deaminase type 2 subfamily. Zn(2+) is required as a cofactor.

The protein localises to the cytoplasm. It is found in the nucleus. It carries out the reaction adenine + H2O + H(+) = hypoxanthine + NH4(+). In terms of biological role, catalyzes the hydrolytic deamination of adenine to hypoxanthine. Plays an important role in the purine salvage pathway and in nitrogen catabolism. This is Adenine deaminase (aah1) from Aspergillus fumigatus (strain ATCC MYA-4609 / CBS 101355 / FGSC A1100 / Af293) (Neosartorya fumigata).